Reading from the N-terminus, the 316-residue chain is Thymidylate synthase (316 aa).

Residues R23 and 178–179 (RR) contribute to the dUMP site. C198 serves as the catalytic Nucleophile. DUMP is bound by residues 218–221 (RSAD), N229, and 259–261 (HLY). D221 provides a ligand contact to (6R)-5,10-methylene-5,6,7,8-tetrahydrofolate. A315 contacts (6R)-5,10-methylene-5,6,7,8-tetrahydrofolate.

It belongs to the thymidylate synthase family. Bacterial-type ThyA subfamily. As to quaternary structure, homodimer.

The protein localises to the cytoplasm. The catalysed reaction is dUMP + (6R)-5,10-methylene-5,6,7,8-tetrahydrofolate = 7,8-dihydrofolate + dTMP. The protein operates within pyrimidine metabolism; dTTP biosynthesis. Catalyzes the reductive methylation of 2'-deoxyuridine-5'-monophosphate (dUMP) to 2'-deoxythymidine-5'-monophosphate (dTMP) while utilizing 5,10-methylenetetrahydrofolate (mTHF) as the methyl donor and reductant in the reaction, yielding dihydrofolate (DHF) as a by-product. This enzymatic reaction provides an intracellular de novo source of dTMP, an essential precursor for DNA biosynthesis. The polypeptide is Thymidylate synthase (Lacticaseibacillus casei (Lactobacillus casei)).